The sequence spans 351 residues: Phosphoribosylformylglycinamidine cyclo-ligase (351 aa).

This sequence belongs to the AIR synthase family.

The protein localises to the cytoplasm. The catalysed reaction is 2-formamido-N(1)-(5-O-phospho-beta-D-ribosyl)acetamidine + ATP = 5-amino-1-(5-phospho-beta-D-ribosyl)imidazole + ADP + phosphate + H(+). The protein operates within purine metabolism; IMP biosynthesis via de novo pathway; 5-amino-1-(5-phospho-D-ribosyl)imidazole from N(2)-formyl-N(1)-(5-phospho-D-ribosyl)glycinamide: step 2/2. In Oleidesulfovibrio alaskensis (strain ATCC BAA-1058 / DSM 17464 / G20) (Desulfovibrio alaskensis), this protein is Phosphoribosylformylglycinamidine cyclo-ligase.